Consider the following 555-residue polypeptide: Glucosylglycerate phosphorylase (555 aa).

Asp-231 acts as the Nucleophile in catalysis.

It belongs to the glycosyl hydrolase 13 family. Glucosylglycerate phosphorylase subfamily.

It catalyses the reaction (2R)-2-O-(alpha-D-glucopyranosyl)-glycerate + phosphate = (R)-glycerate + alpha-D-glucose 1-phosphate. Catalyzes the reversible phosphorolysis of glucosylglycerate into alpha-D-glucose 1-phosphate (Glc1P) and D-glycerate. May be a regulator of intracellular levels of glucosylglycerate, a compatible solute that primarily protects organisms facing salt stress and very specific nutritional constraints. Has a very strict substrate specificity. Cannot catalyze the phosphorolysis of sucrose or synthesize sucrose from Glc1P and D-fructose. The protein is Glucosylglycerate phosphorylase of Allomeiothermus silvanus (strain ATCC 700542 / DSM 9946 / NBRC 106475 / NCIMB 13440 / VI-R2) (Thermus silvanus).